The following is a 76-amino-acid chain: Exodeoxyribonuclease 7 small subunit (76 aa).

The protein belongs to the XseB family. As to quaternary structure, heterooligomer composed of large and small subunits.

The protein localises to the cytoplasm. It catalyses the reaction Exonucleolytic cleavage in either 5'- to 3'- or 3'- to 5'-direction to yield nucleoside 5'-phosphates.. Functionally, bidirectionally degrades single-stranded DNA into large acid-insoluble oligonucleotides, which are then degraded further into small acid-soluble oligonucleotides. The protein is Exodeoxyribonuclease 7 small subunit of Geotalea uraniireducens (strain Rf4) (Geobacter uraniireducens).